Reading from the N-terminus, the 116-residue chain is Ribosome-binding factor A (116 aa).

Belongs to the RbfA family. Monomer. Binds 30S ribosomal subunits, but not 50S ribosomal subunits or 70S ribosomes.

Its subcellular location is the cytoplasm. In terms of biological role, one of several proteins that assist in the late maturation steps of the functional core of the 30S ribosomal subunit. Associates with free 30S ribosomal subunits (but not with 30S subunits that are part of 70S ribosomes or polysomes). Required for efficient processing of 16S rRNA. May interact with the 5'-terminal helix region of 16S rRNA. The polypeptide is Ribosome-binding factor A (Streptococcus pyogenes serotype M3 (strain SSI-1)).